Consider the following 321-residue polypeptide: MGKAVIAIHGGAGAISRAQMSLQQELRYIEALSAIVETGQKMLEAGESALDVVTEAVRLLEECPLFNAGIGAVFTRDETHELDACVMDGNTLKAGAVAGVSHLRNPVLAARLVMEQSPHVMMIGEGAENFAFARGMERVSPEIFSTSLRYEQLLAARKEGATVLDHSGAPLDEKQKMGTVGAVALDLDGNLAAATSTGGMTNKLPGRVGDSPLVGAGCYANNASVAVSCTGTGEVFIRALAAYDIAALMDYGGLSLAEACERVVMEKLPALGGSGGLIAIDHEGNVALPFNTEGMYRAWGYAGDTPTTGIYREKGDTVATQ.

Threonine 179 functions as the Nucleophile in the catalytic mechanism. Residues 207–210 (RVGD) and 230–233 (TGTG) contribute to the substrate site.

Belongs to the Ntn-hydrolase family. As to quaternary structure, heterotetramer of two alpha and two beta chains arranged as a dimer of alpha/beta heterodimers. Autocleaved. Generates the alpha and beta subunits. The N-terminal residue of the beta subunit is thought to be responsible for the nucleophile hydrolase activity. In terms of processing, both subunits undergo further processing at their C-termini. The overexpressed alpha subunit seems to consist of residues 2-161, with an oxidized Met residue and a tightly coordinated Na(+), whereas the overexpressed beta subunit is processed to residue 315 and has 3 oxidized Met residues. Processing of the alpha subunit is inhibited by Zn(2+).

The enzyme catalyses Cleavage of a beta-linked Asp residue from the N-terminus of a polypeptide.. Functionally, degrades proteins damaged by L-isoaspartyl residue formation (also known as beta-Asp residues). Degrades L-isoaspartyl-containing di- and maybe also tripeptides. Also has L-asparaginase activity, although this may not be its principal function. May be involved in glutathione, and possibly other peptide, transport, although these results could also be due to polar effects of disruption. The chain is Isoaspartyl peptidase (iaaA) from Escherichia coli (strain K12).